A 280-amino-acid polypeptide reads, in one-letter code: Ribosomal RNA small subunit methyltransferase A (280 aa).

The S-adenosyl-L-methionine site is built by N11, L13, G37, E57, D85, and N106.

It belongs to the class I-like SAM-binding methyltransferase superfamily. rRNA adenine N(6)-methyltransferase family. RsmA subfamily.

It localises to the cytoplasm. It carries out the reaction adenosine(1518)/adenosine(1519) in 16S rRNA + 4 S-adenosyl-L-methionine = N(6)-dimethyladenosine(1518)/N(6)-dimethyladenosine(1519) in 16S rRNA + 4 S-adenosyl-L-homocysteine + 4 H(+). Specifically dimethylates two adjacent adenosines (A1518 and A1519) in the loop of a conserved hairpin near the 3'-end of 16S rRNA in the 30S particle. May play a critical role in biogenesis of 30S subunits. The chain is Ribosomal RNA small subunit methyltransferase A from Campylobacter concisus (strain 13826).